The following is a 248-amino-acid chain: Triosephosphate isomerase (248 aa).

9 to 11 contributes to the substrate binding site; the sequence is NWK. Residue His92 is the Electrophile of the active site. Glu164 functions as the Proton acceptor in the catalytic mechanism. Residues Gly170, Ser209, and 230–231 each bind substrate; that span reads GG.

Belongs to the triosephosphate isomerase family. Homodimer.

The protein resides in the cytoplasm. It carries out the reaction D-glyceraldehyde 3-phosphate = dihydroxyacetone phosphate. Its pathway is carbohydrate biosynthesis; gluconeogenesis. It participates in carbohydrate degradation; glycolysis; D-glyceraldehyde 3-phosphate from glycerone phosphate: step 1/1. Involved in the gluconeogenesis. Catalyzes stereospecifically the conversion of dihydroxyacetone phosphate (DHAP) to D-glyceraldehyde-3-phosphate (G3P). The chain is Triosephosphate isomerase from Thiobacillus denitrificans (strain ATCC 25259 / T1).